The primary structure comprises 230 residues: V-type proton ATPase subunit E (230 aa).

It belongs to the V-ATPase E subunit family. V-ATPase is a heteromultimeric enzyme composed of a peripheral catalytic V1 complex (components A to H) attached to an integral membrane V0 proton pore complex (components: a, c, c', c'', d, e, f and VOA1).

It localises to the vacuole membrane. Functionally, subunit of the V1 complex of vacuolar(H+)-ATPase (V-ATPase), a multisubunit enzyme composed of a peripheral complex (V1) that hydrolyzes ATP and a membrane integral complex (V0) that translocates protons. V-ATPase is responsible for acidifying and maintaining the pH of intracellular compartments. The sequence is that of V-type proton ATPase subunit E from Neurospora crassa (strain ATCC 24698 / 74-OR23-1A / CBS 708.71 / DSM 1257 / FGSC 987).